Consider the following 120-residue polypeptide: uncharacterized protein (120 aa).

Positions 1–16 (MFKFILLCFCINFAFS) are cleaved as a signal peptide.

This is an uncharacterized protein from Acheta domesticus (House cricket).